Reading from the N-terminus, the 800-residue chain is DNA topoisomerase 4 subunit A (800 aa).

Residues 31 to 495 (LPDVRDGLKP…EIEEIKIDKE (465 aa)) form the Topo IIA-type catalytic domain. Y119 serves as the catalytic O-(5'-phospho-DNA)-tyrosine intermediate.

The protein belongs to the type II topoisomerase GyrA/ParC subunit family. ParC type 2 subfamily. Heterotetramer composed of ParC and ParE.

The protein resides in the cell membrane. The enzyme catalyses ATP-dependent breakage, passage and rejoining of double-stranded DNA.. Functionally, topoisomerase IV is essential for chromosome segregation. It relaxes supercoiled DNA. Performs the decatenation events required during the replication of a circular DNA molecule. This Staphylococcus aureus (strain MRSA252) protein is DNA topoisomerase 4 subunit A.